The primary structure comprises 396 residues: Cathepsin E (396 aa).

The signal sequence occupies residues 1–19; that stretch reads MKTLPLLLLLLLDLGQAQG. Positions 20–53 are cleaved as a propeptide — activation peptide; that stretch reads TLDRVPLRRQPSLRKKLRAQGQLSEFWKAHKVDM. The 315-residue stretch at 78–392 folds into the Peptidase A1 domain; the sequence is YFGTISIGSP…DRGSNRVGLA (315 aa). Asn90 carries N-linked (GlcNAc...) asparagine glycosylation. Asp96 is a catalytic residue. 2 disulfides stabilise this stretch: Cys109–Cys114 and Cys272–Cys276. Asp281 is a catalytic residue. A disulfide bridge connects residues Cys314 and Cys351.

It belongs to the peptidase A1 family. As to quaternary structure, homodimer; disulfide-linked. Glycosylated. The nature of the carbohydrate chain varies between cell types.

The protein resides in the endosome. It carries out the reaction Similar to cathepsin D, but slightly broader specificity.. May have a role in immune function. Probably involved in the processing of antigenic peptides during MHC class II-mediated antigen presentation. May play a role in activation-induced lymphocyte depletion in the thymus, and in neuronal degeneration and glial cell activation in the brain. The protein is Cathepsin E (CTSE) of Oryctolagus cuniculus (Rabbit).